The following is a 367-amino-acid chain: MKILFIGSRLYDDIDYYVRENGIESIITESNEDAINLDLPDQVFIVPRGMDSPKQIAISQNVDAVVPLIGIDPPLIEVAKMKEELEAETDIPVIAANVRAVRLTSDKIKTKEFYNEIGVPTPQYQILAKDDFESKLKMEFPVVLKQGQGQGGKDIKVAESLDDVKEYFEEFDHALCEKFIEGSEISIEVLGYNGEYVPLSPIYKGETTLEGIHPLNKIKTAPCLVEGLDNNLVQRTAYKVAKNLGSDGIFEMDFMFSKDEQQLYAIEVNTRPNGTRYLTTATCGVNSLCELVNMAAGKFSIKDIQDKLEYYYATEIPIGRYKGPDLNEPLKSFKNNDWVVHGPEGYQRITIRADSKEQLDRYVEDLI.

An ATP-grasp domain is found at 111–296 (KEFYNEIGVP…SLCELVNMAA (186 aa)). Residue 137–186 (KMEFPVVLKQGQGQGGKDIKVAESLDDVKEYFEEFDHALCEKFIEGSEIS) coordinates ATP. Residues Asp253, Glu267, and Asn269 each coordinate Mg(2+). Mn(2+) is bound by residues Asp253, Glu267, and Asn269.

This sequence belongs to the small carbamoyl-phosphate synthase family. As to quaternary structure, forms homodimers and homotetramers (dimers of dimers). Requires Mg(2+) as cofactor. It depends on Mn(2+) as a cofactor.

The enzyme catalyses hydrogencarbonate + NH4(+) + 2 ATP = carbamoyl phosphate + 2 ADP + phosphate + 2 H(+). Functionally, catalyzes the synthesis of carbamoyl phosphate from ATP, ammonium and bicarbonate. Proceeds via a three-step mechanism, i.e. the phosphorylation of hydrogencarbonate to carboxyphosphate, a nucleophilic attack of ammonia on carboxyphosphate yielding carbamate, and the phosphorylation of carbamate forming carbamoyl phosphate. In M.smithii, the predominant archaeon in the human gut, one function of this enzyme may be to sequester ammonia, a scarce nutrient in the intestine which is the major source of nitrogen in M.smithii for the biosynthesis of nucleotides, amino acids, and many other metabolites. This Methanobrevibacter smithii (strain ATCC 35061 / DSM 861 / OCM 144 / PS) protein is Carbamoyl-phosphate synthase.